The primary structure comprises 209 residues: Small ribosomal subunit protein uS4 (209 aa).

Residues Thr-99 to Leu-164 enclose the S4 RNA-binding domain.

Belongs to the universal ribosomal protein uS4 family. In terms of assembly, part of the 30S ribosomal subunit. Contacts protein S5. The interaction surface between S4 and S5 is involved in control of translational fidelity.

Functionally, one of the primary rRNA binding proteins, it binds directly to 16S rRNA where it nucleates assembly of the body of the 30S subunit. Its function is as follows. With S5 and S12 plays an important role in translational accuracy. In Natranaerobius thermophilus (strain ATCC BAA-1301 / DSM 18059 / JW/NM-WN-LF), this protein is Small ribosomal subunit protein uS4.